The following is a 184-amino-acid chain: Peptidyl-tRNA hydrolase (184 aa).

TRNA is bound at residue Y13. H18 serves as the catalytic Proton acceptor. Positions 59, 61, and 105 each coordinate tRNA.

This sequence belongs to the PTH family. In terms of assembly, monomer.

Its subcellular location is the cytoplasm. The catalysed reaction is an N-acyl-L-alpha-aminoacyl-tRNA + H2O = an N-acyl-L-amino acid + a tRNA + H(+). Its function is as follows. Hydrolyzes ribosome-free peptidyl-tRNAs (with 1 or more amino acids incorporated), which drop off the ribosome during protein synthesis, or as a result of ribosome stalling. In terms of biological role, catalyzes the release of premature peptidyl moieties from peptidyl-tRNA molecules trapped in stalled 50S ribosomal subunits, and thus maintains levels of free tRNAs and 50S ribosomes. This Sulfurimonas denitrificans (strain ATCC 33889 / DSM 1251) (Thiomicrospira denitrificans (strain ATCC 33889 / DSM 1251)) protein is Peptidyl-tRNA hydrolase.